A 675-amino-acid polypeptide reads, in one-letter code: Vacuolar protein sorting-associated protein 5 (675 aa).

Disordered regions lie at residues Met-1–Val-26, Glu-65–Asn-84, and Arg-165–Asn-219. The span at Arg-168 to Arg-180 shows a compositional bias: basic residues. The span at Pro-195–Glu-204 shows a compositional bias: basic and acidic residues. The region spanning Val-279 to Ser-394 is the PX domain. Residues Arg-320, Lys-346, and Arg-360 each coordinate a 1,2-diacyl-sn-glycero-3-phospho-(1D-myo-inositol-3-phosphate).

The protein belongs to the sorting nexin family. As to quaternary structure, component of the retromer complex which consists of VPS29, VPS26, VPS35, VPS5 and VPS17. Component of a retromer subcomplex consisting of VPSD5 and VPS17. Phosphorylated on serine residue(s).

The protein resides in the cytoplasm. The protein localises to the golgi apparatus membrane. It is found in the endosome membrane. Functionally, plays a role in vesicular protein sorting. Required for retention of late Golgi membrane proteins and vacuolar biogenesis. Component of the membrane-associated retromer complex which is essential in endosome-to-Golgi retrograde transport. The VPS5-VPS17 subcomplex may assemble onto the membrane to promote vesicle formation. In Saccharomyces cerevisiae (strain ATCC 204508 / S288c) (Baker's yeast), this protein is Vacuolar protein sorting-associated protein 5 (VPS5).